We begin with the raw amino-acid sequence, 210 residues long: Proteasome subunit beta (210 aa).

Residues 1 to 9 constitute a propeptide, removed in mature form; by autocatalysis; the sequence is MDNDKHLKG. The active-site Nucleophile is T10.

The protein belongs to the peptidase T1B family. As to quaternary structure, the 20S proteasome core is composed of 14 alpha and 14 beta subunits that assemble into four stacked heptameric rings, resulting in a barrel-shaped structure. The two inner rings, each composed of seven catalytic beta subunits, are sandwiched by two outer rings, each composed of seven alpha subunits. The catalytic chamber with the active sites is on the inside of the barrel. Has a gated structure, the ends of the cylinder being occluded by the N-termini of the alpha-subunits. Is capped at one or both ends by the proteasome regulatory ATPase, PAN.

It localises to the cytoplasm. It carries out the reaction Cleavage of peptide bonds with very broad specificity.. Its activity is regulated as follows. The formation of the proteasomal ATPase PAN-20S proteasome complex, via the docking of the C-termini of PAN into the intersubunit pockets in the alpha-rings, triggers opening of the gate for substrate entry. Interconversion between the open-gate and close-gate conformations leads to a dynamic regulation of the 20S proteasome proteolysis activity. Its function is as follows. Component of the proteasome core, a large protease complex with broad specificity involved in protein degradation. The polypeptide is Proteasome subunit beta (Methanococcoides burtonii (strain DSM 6242 / NBRC 107633 / OCM 468 / ACE-M)).